Consider the following 105-residue polypeptide: Urease subunit gamma (105 aa).

It belongs to the urease gamma subunit family. As to quaternary structure, heterotrimer of UreA (gamma), UreB (beta) and UreC (alpha) subunits. Three heterotrimers associate to form the active enzyme.

It is found in the cytoplasm. It catalyses the reaction urea + 2 H2O + H(+) = hydrogencarbonate + 2 NH4(+). The protein operates within nitrogen metabolism; urea degradation; CO(2) and NH(3) from urea (urease route): step 1/1. This is Urease subunit gamma from Bacillus subtilis (strain 168).